Here is a 401-residue protein sequence, read N- to C-terminus: Nicotinamide/nicotinic acid mononucleotide adenylyltransferase 1 (401 aa).

Disordered stretches follow at residues 1-30 (MDPT…KIPK) and 48-123 (APFN…RGVQ). Basic residues predominate over residues 52–69 (IKRKKKHPKHHHHHHHSR). A phosphoserine mark is found at Ser-91, Ser-95, Ser-96, and Ser-111. Residues Ser-173 and Phe-174 each contribute to the NAD(+) site. Residue His-181 coordinates ATP. The NAD(+) site is built by Thr-253, Gly-288, Asp-290, Trp-301, Arg-320, and Asn-351. 356 to 359 (TKVR) contacts ATP.

Belongs to the eukaryotic NMN adenylyltransferase family. Homotetramer. Requires Ni(2+) as cofactor.

It localises to the cytoplasm. The protein resides in the nucleus. The enzyme catalyses beta-nicotinamide D-ribonucleotide + ATP + H(+) = diphosphate + NAD(+). It catalyses the reaction nicotinate beta-D-ribonucleotide + ATP + H(+) = deamido-NAD(+) + diphosphate. Its pathway is cofactor biosynthesis; NAD(+) biosynthesis; deamido-NAD(+) from nicotinate D-ribonucleotide: step 1/1. It participates in cofactor biosynthesis; NAD(+) biosynthesis; NAD(+) from nicotinamide D-ribonucleotide: step 1/1. Functionally, catalyzes the formation of NAD(+) from nicotinamide mononucleotide (NMN) and ATP. Can also use the deamidated form; nicotinic acid mononucleotide (NaMN) as substrate to form deamido-NAD(+) (NaAD). Key enzyme in both de novo and salvage pathways for NAD(+) biosynthesis. Predominantly acts in the salvage pathways via NMN. In Saccharomyces cerevisiae (strain ATCC 204508 / S288c) (Baker's yeast), this protein is Nicotinamide/nicotinic acid mononucleotide adenylyltransferase 1.